Consider the following 349-residue polypeptide: S-adenosylmethionine:tRNA ribosyltransferase-isomerase (349 aa).

It belongs to the QueA family. As to quaternary structure, monomer.

It is found in the cytoplasm. It catalyses the reaction 7-aminomethyl-7-carbaguanosine(34) in tRNA + S-adenosyl-L-methionine = epoxyqueuosine(34) in tRNA + adenine + L-methionine + 2 H(+). It participates in tRNA modification; tRNA-queuosine biosynthesis. In terms of biological role, transfers and isomerizes the ribose moiety from AdoMet to the 7-aminomethyl group of 7-deazaguanine (preQ1-tRNA) to give epoxyqueuosine (oQ-tRNA). The protein is S-adenosylmethionine:tRNA ribosyltransferase-isomerase of Pseudomonas putida (strain W619).